A 662-amino-acid chain; its full sequence is High affinity sulfate transporter 2 (662 aa).

The interval M1–L35 is disordered. A run of 12 helical transmembrane segments spans residues G103 to A123, L128 to G148, I153 to I173, L182 to C202, G205 to I225, W264 to A284, F291 to I311, A346 to G366, M383 to G403, V420 to F440, V447 to L467, and G481 to I501. Positions Q532 to Y655 constitute an STAS domain.

This sequence belongs to the SLC26A/SulP transporter (TC 2.A.53) family.

Its subcellular location is the membrane. High-affinity H(+)/sulfate cotransporter that mediates the uptake of sulfate by plant roots from low concentrations of sulfate in the soil solution. The chain is High affinity sulfate transporter 2 (ST2) from Stylosanthes hamata (Caribbean stylo).